Consider the following 203-residue polypeptide: Shikimate kinase (203 aa).

Residue 38 to 43 (GAGKST) participates in ATP binding. Position 42 (S42) interacts with Mg(2+). 3 residues coordinate substrate: D60, R84, and G106. R144 is a binding site for ATP. Residue R163 coordinates substrate.

It belongs to the shikimate kinase family. Monomer. Mg(2+) serves as cofactor.

Its subcellular location is the cytoplasm. The catalysed reaction is shikimate + ATP = 3-phosphoshikimate + ADP + H(+). The protein operates within metabolic intermediate biosynthesis; chorismate biosynthesis; chorismate from D-erythrose 4-phosphate and phosphoenolpyruvate: step 5/7. In terms of biological role, catalyzes the specific phosphorylation of the 3-hydroxyl group of shikimic acid using ATP as a cosubstrate. The protein is Shikimate kinase of Rhodopseudomonas palustris (strain ATCC BAA-98 / CGA009).